Here is a 722-residue protein sequence, read N- to C-terminus: Ras and EF-hand domain-containing protein (722 aa).

EF-hand domains lie at 5–39 and 39–74; these read DELS…ELKV and VSPS…ARGL. Over residues 75–84 the composition is skewed to basic and acidic residues; it reads HMPEGKKDVE. Residues 75 to 109 are disordered; it reads HMPEGKKDVEQGEPPKSPSTPDKEEKPEETSSPAW. Residues 156–335 are a coiled coil; the sequence is REIRLQSTEM…ANRKLHDSND (180 aa). Residues 355-374 show a composition bias toward polar residues; that stretch reads INTSPGSTISRNSPKLTRCT. Disordered stretches follow at residues 355-384 and 439-491; these read INTS…PRSS and FHRS…SGAS. Residues 480 to 491 show a composition bias toward low complexity; sequence SNPVSRSSSGAS. Residues 532–537, 635–638, and 672–673 contribute to the GTP site; these read AVGKSS, NKAD, and AK.

It belongs to the small GTPase superfamily. Rab family. Homodimer.

Its subcellular location is the cytoplasm. The protein resides in the perinuclear region. Its function is as follows. Binds predominantly GDP, and also GTP. This is Ras and EF-hand domain-containing protein (rasef) from Xenopus tropicalis (Western clawed frog).